The following is a 478-amino-acid chain: uncharacterized protein (478 aa).

Residues M2 to E120 enclose the RCK N-terminal domain.

This is an uncharacterized protein from Methanocaldococcus jannaschii (strain ATCC 43067 / DSM 2661 / JAL-1 / JCM 10045 / NBRC 100440) (Methanococcus jannaschii).